The chain runs to 179 residues: Cytochrome b6-f complex iron-sulfur subunit (179 aa).

A helical membrane pass occupies residues 21 to 43 (LLTFGTVTGVALGALYPVVNYFI). The 102-residue stretch at 61–162 (GNDIIVSEFL…ANVSDDKLVF (102 aa)) folds into the Rieske domain. Residues Cys-108, His-110, Cys-126, and His-129 each coordinate [2Fe-2S] cluster. The cysteines at positions 113 and 128 are disulfide-linked.

The protein belongs to the Rieske iron-sulfur protein family. The 4 large subunits of the cytochrome b6-f complex are cytochrome b6, subunit IV (17 kDa polypeptide, PetD), cytochrome f and the Rieske protein, while the 4 small subunits are PetG, PetL, PetM and PetN. The complex functions as a dimer. [2Fe-2S] cluster is required as a cofactor.

It localises to the cellular thylakoid membrane. The catalysed reaction is 2 oxidized [plastocyanin] + a plastoquinol + 2 H(+)(in) = 2 reduced [plastocyanin] + a plastoquinone + 4 H(+)(out). Functionally, component of the cytochrome b6-f complex, which mediates electron transfer between photosystem II (PSII) and photosystem I (PSI), cyclic electron flow around PSI, and state transitions. This is Cytochrome b6-f complex iron-sulfur subunit from Trichodesmium erythraeum (strain IMS101).